Reading from the N-terminus, the 261-residue chain is Pyridoxine 5'-phosphate synthase (261 aa).

Residue Asn-6 participates in 3-amino-2-oxopropyl phosphate binding. 1-deoxy-D-xylulose 5-phosphate is bound at residue 8 to 9; it reads DH. Residue Arg-17 participates in 3-amino-2-oxopropyl phosphate binding. His-42 functions as the Proton acceptor in the catalytic mechanism. Residues Arg-44 and His-49 each contribute to the 1-deoxy-D-xylulose 5-phosphate site. Residue Glu-69 is the Proton acceptor of the active site. Thr-99 lines the 1-deoxy-D-xylulose 5-phosphate pocket. His-213 acts as the Proton donor in catalysis. 3-amino-2-oxopropyl phosphate contacts are provided by residues Gly-214 and 235–236; that span reads GQ.

The protein belongs to the PNP synthase family. In terms of assembly, homooctamer; tetramer of dimers.

Its subcellular location is the cytoplasm. It catalyses the reaction 3-amino-2-oxopropyl phosphate + 1-deoxy-D-xylulose 5-phosphate = pyridoxine 5'-phosphate + phosphate + 2 H2O + H(+). It functions in the pathway cofactor biosynthesis; pyridoxine 5'-phosphate biosynthesis; pyridoxine 5'-phosphate from D-erythrose 4-phosphate: step 5/5. Its function is as follows. Catalyzes the complicated ring closure reaction between the two acyclic compounds 1-deoxy-D-xylulose-5-phosphate (DXP) and 3-amino-2-oxopropyl phosphate (1-amino-acetone-3-phosphate or AAP) to form pyridoxine 5'-phosphate (PNP) and inorganic phosphate. The polypeptide is Pyridoxine 5'-phosphate synthase (Aliarcobacter butzleri (strain RM4018) (Arcobacter butzleri)).